Reading from the N-terminus, the 45-residue chain is Movement protein p5 (45 aa).

A helical membrane pass occupies residues I8 to V28.

The protein localises to the host rough endoplasmic reticulum membrane. Transports viral genome to neighboring plant cells directly through plasmosdesmata, without any budding. The movement protein allows efficient cell to cell propagation, by bypassing the host cell wall barrier. Two movement proteins, p6, Hsp70h and three structural proteins, CP, CPm, and P64 are essential for cell-cell movement. Also plays a role in virion formation. Together with CPm and p64, encapsidates the 5'-terminal portion of the viral genome. The sequence is that of Movement protein p5 from Grapevine leafroll-associated virus 3 (isolate United States/NY1) (GLRaV-3).